A 94-amino-acid chain; its full sequence is Pyrimidine/purine nucleoside phosphorylase (94 aa).

It belongs to the nucleoside phosphorylase PpnP family.

The enzyme catalyses a purine D-ribonucleoside + phosphate = a purine nucleobase + alpha-D-ribose 1-phosphate. It carries out the reaction adenosine + phosphate = alpha-D-ribose 1-phosphate + adenine. It catalyses the reaction cytidine + phosphate = cytosine + alpha-D-ribose 1-phosphate. The catalysed reaction is guanosine + phosphate = alpha-D-ribose 1-phosphate + guanine. The enzyme catalyses inosine + phosphate = alpha-D-ribose 1-phosphate + hypoxanthine. It carries out the reaction thymidine + phosphate = 2-deoxy-alpha-D-ribose 1-phosphate + thymine. It catalyses the reaction uridine + phosphate = alpha-D-ribose 1-phosphate + uracil. The catalysed reaction is xanthosine + phosphate = alpha-D-ribose 1-phosphate + xanthine. Functionally, catalyzes the phosphorolysis of diverse nucleosides, yielding D-ribose 1-phosphate and the respective free bases. Can use uridine, adenosine, guanosine, cytidine, thymidine, inosine and xanthosine as substrates. Also catalyzes the reverse reactions. The polypeptide is Pyrimidine/purine nucleoside phosphorylase (Aeromonas hydrophila subsp. hydrophila (strain ATCC 7966 / DSM 30187 / BCRC 13018 / CCUG 14551 / JCM 1027 / KCTC 2358 / NCIMB 9240 / NCTC 8049)).